The primary structure comprises 194 residues: Holliday junction branch migration complex subunit RuvA (194 aa).

Residues 1 to 64 form a domain I region; it reads MIARLSGILV…EDAQLLYGFG (64 aa). The segment at 65–141 is domain II; sequence SDQERATFRQ…FAIDGGTALA (77 aa). The tract at residues 141–144 is flexible linker; the sequence is AGSN. The domain III stretch occupies residues 145 to 194; that stretch reads PAKSASSDVLNALLALGYNEREALAAVKQLPADIAVAEGIKLSLKSLSKT.

It belongs to the RuvA family. In terms of assembly, homotetramer. Forms an RuvA(8)-RuvB(12)-Holliday junction (HJ) complex. HJ DNA is sandwiched between 2 RuvA tetramers; dsDNA enters through RuvA and exits via RuvB. An RuvB hexamer assembles on each DNA strand where it exits the tetramer. Each RuvB hexamer is contacted by two RuvA subunits (via domain III) on 2 adjacent RuvB subunits; this complex drives branch migration. In the full resolvosome a probable DNA-RuvA(4)-RuvB(12)-RuvC(2) complex forms which resolves the HJ.

It localises to the cytoplasm. The RuvA-RuvB-RuvC complex processes Holliday junction (HJ) DNA during genetic recombination and DNA repair, while the RuvA-RuvB complex plays an important role in the rescue of blocked DNA replication forks via replication fork reversal (RFR). RuvA specifically binds to HJ cruciform DNA, conferring on it an open structure. The RuvB hexamer acts as an ATP-dependent pump, pulling dsDNA into and through the RuvAB complex. HJ branch migration allows RuvC to scan DNA until it finds its consensus sequence, where it cleaves and resolves the cruciform DNA. The protein is Holliday junction branch migration complex subunit RuvA of Methylobacillus flagellatus (strain ATCC 51484 / DSM 6875 / VKM B-1610 / KT).